A 31-amino-acid chain; its full sequence is Cyclotide cter-E (31 aa).

The segment at residues 1–31 (GIPCAESCVWIPCTVTALLGCSCKDKVCYLD) is a cross-link (cyclopeptide (Gly-Asp)). 3 cysteine pairs are disulfide-bonded: Cys4-Cys21, Cys8-Cys23, and Cys13-Cys28.

Contains 3 disulfide bonds. Post-translationally, this is a cyclic peptide.

In terms of biological role, probably participates in a plant defense mechanism. The polypeptide is Cyclotide cter-E (Clitoria ternatea (Butterfly pea)).